A 276-amino-acid polypeptide reads, in one-letter code: Urease accessory protein UreD (276 aa).

It belongs to the UreD family. UreD, UreF and UreG form a complex that acts as a GTP-hydrolysis-dependent molecular chaperone, activating the urease apoprotein by helping to assemble the nickel containing metallocenter of UreC. The UreE protein probably delivers the nickel.

It is found in the cytoplasm. Functionally, required for maturation of urease via the functional incorporation of the urease nickel metallocenter. This is Urease accessory protein UreD from Variovorax paradoxus (strain S110).